Here is a 178-residue protein sequence, read N- to C-terminus: Large ribosomal subunit protein uL6 (178 aa).

This sequence belongs to the universal ribosomal protein uL6 family. Part of the 50S ribosomal subunit.

This protein binds to the 23S rRNA, and is important in its secondary structure. It is located near the subunit interface in the base of the L7/L12 stalk, and near the tRNA binding site of the peptidyltransferase center. In Sulfurovum sp. (strain NBC37-1), this protein is Large ribosomal subunit protein uL6.